The sequence spans 712 residues: Transcriptional regulator GZF3 (712 aa).

Polar residues predominate over residues 1-13 (MSMSDIQQRPQIP). Disordered stretches follow at residues 1–20 (MSMS…TAAV), 27–135 (NVNT…GPVC), 173–280 (SLKT…HHHL), 377–533 (DVSS…GNNF), and 596–712 (LNNN…KVKI). Low complexity-rich tracts occupy residues 27–84 (NVNT…EQSS) and 107–131 (PKTG…ISMS). A GATA-type zinc finger spans residues 135-159 (CGNCQTQTTPLWRRDETGQVLCNAC). Residues 186–199 (KQNGSNSQSSKSSG) are compositionally biased toward low complexity. Positions 213 to 223 (GKKSPKSKKKS) are enriched in basic residues. Residues 246 to 261 (ATSNNTPTFKSTTSQS) show a composition bias toward polar residues. Over residues 268–280 (NHHHQHHNHHHHL) the composition is skewed to basic residues. Residues 379–414 (SSINGSSTSLSSSSASSSIFSSVAPSTSSSSSLSNG) show a composition bias toward low complexity. Composition is skewed to polar residues over residues 429–447 (SKIS…TPLQ) and 484–498 (QQSM…RSPI). Composition is skewed to low complexity over residues 499–532 (NGNQ…NGNN) and 596–616 (LNNN…QPQQ). Positions 545-598 (TRISELELVNDLYRTRIMELEAMEQAARLRENSMKKRLDEVMNLQINYQNLLNN) form a coiled coil. Positions 631 to 667 (DQGSQSISPNVSITGSTTITSPNSRSKIISETTPTHH) are enriched in polar residues.

Its subcellular location is the nucleus. Its function is as follows. Probable transcription factor involved in response to fluconazole, LiCl, and copper. The chain is Transcriptional regulator GZF3 (GZF3) from Candida albicans (strain SC5314 / ATCC MYA-2876) (Yeast).